Reading from the N-terminus, the 229-residue chain is MTPEEYLEGQVLLIDKPLKWSSFQAVNKLKYLLINKVGLPKKFKIGHAGTLDPLATGLLLICTGKFTKKISELQGQAKEYTGTFYIGATTPSYDLETEIDQTFPTEHINEVLIHETVKQFLGEIDQKPPIFSAIKKDGVRLYEHARAGESIEIESRKTTIHEFEITRIALPEIDFRVVCSKGTYIRSLAYDFGKAMNSGSHLTVLRRTKIGDYDVKNAIDITLFEESLQ.

Residue Asp-52 is the Nucleophile of the active site.

This sequence belongs to the pseudouridine synthase TruB family. Type 1 subfamily.

It carries out the reaction uridine(55) in tRNA = pseudouridine(55) in tRNA. Responsible for synthesis of pseudouridine from uracil-55 in the psi GC loop of transfer RNAs. The sequence is that of tRNA pseudouridine synthase B from Flavobacterium johnsoniae (strain ATCC 17061 / DSM 2064 / JCM 8514 / BCRC 14874 / CCUG 350202 / NBRC 14942 / NCIMB 11054 / UW101) (Cytophaga johnsonae).